The following is a 564-amino-acid chain: Dihydroxy-acid dehydratase (564 aa).

Cys53 lines the [2Fe-2S] cluster pocket. Residue Asp85 participates in Mg(2+) binding. A [2Fe-2S] cluster-binding site is contributed by Cys126. Residues Asp127 and Lys128 each coordinate Mg(2+). At Lys128 the chain carries N6-carboxylysine. Cys203 contributes to the [2Fe-2S] cluster binding site. A Mg(2+)-binding site is contributed by Glu454. The active-site Proton acceptor is Ser480.

It belongs to the IlvD/Edd family. Homodimer. [2Fe-2S] cluster is required as a cofactor. It depends on Mg(2+) as a cofactor.

The catalysed reaction is (2R)-2,3-dihydroxy-3-methylbutanoate = 3-methyl-2-oxobutanoate + H2O. It carries out the reaction (2R,3R)-2,3-dihydroxy-3-methylpentanoate = (S)-3-methyl-2-oxopentanoate + H2O. It participates in amino-acid biosynthesis; L-isoleucine biosynthesis; L-isoleucine from 2-oxobutanoate: step 3/4. It functions in the pathway amino-acid biosynthesis; L-valine biosynthesis; L-valine from pyruvate: step 3/4. Functionally, functions in the biosynthesis of branched-chain amino acids. Catalyzes the dehydration of (2R,3R)-2,3-dihydroxy-3-methylpentanoate (2,3-dihydroxy-3-methylvalerate) into 2-oxo-3-methylpentanoate (2-oxo-3-methylvalerate) and of (2R)-2,3-dihydroxy-3-methylbutanoate (2,3-dihydroxyisovalerate) into 2-oxo-3-methylbutanoate (2-oxoisovalerate), the penultimate precursor to L-isoleucine and L-valine, respectively. This Clavibacter michiganensis subsp. michiganensis (strain NCPPB 382) protein is Dihydroxy-acid dehydratase.